The chain runs to 325 residues: Sulfite dehydrogenase subunit C (325 aa).

The next 8 helical transmembrane spans lie at 5 to 25, 43 to 63, 87 to 107, 126 to 146, 165 to 185, 186 to 206, 266 to 286, and 290 to 310; these read FSVIFLTTLLGAGQGLYLAMV, FYAVGSLVALLLLIAGLGASF, EVIVLPIVMALVFAYGVAHWF, LLLGVLGTIASLALFVCTAMI, FLFLGAASGFMLAAAYSAYIG, NPLVTFYGTWAVILTLVGLAS, VYLVLVFPIPVLLIGLSYLIG, and LPIIAFFVQFAGLLIERWSFF.

The protein belongs to the DmsC family. In terms of assembly, forms a heterotrimeric membrane-bound complex composed of a catalytic heterodimer (SoeAB) and a membrane anchor protein (SoeC).

It is found in the cell inner membrane. In terms of biological role, part of the SoeABC complex that catalyzes the oxidation of sulfite to sulfate. SoeC probably anchors and stabilizes the catalytic subunits. The polypeptide is Sulfite dehydrogenase subunit C (Allochromatium vinosum (strain ATCC 17899 / DSM 180 / NBRC 103801 / NCIMB 10441 / D) (Chromatium vinosum)).